Reading from the N-terminus, the 1925-residue chain is Cilia- and flagella-associated protein 65 (1925 aa).

Residues 188–208 (FFTVIPQPIFLSPGITLTLPI) traverse the membrane as a helical segment. The 110-residue stretch at 877–986 (QLKLDTHKSL…THYMLRLVGV (110 aa)) folds into the MSP domain. Residues 1525–1550 (SQQLMRQYHKELQEWKDEKVRQEVEF) adopt a coiled-coil conformation. Disordered stretches follow at residues 1645-1667 (KRKAPREESETSEEKSPNKWGPV) and 1736-1823 (SSWE…PESQ). Basic and acidic residues-rich tracts occupy residues 1649 to 1661 (PREESETSEEKSP) and 1739 to 1762 (EDGKGKQPKEDRPEHYPGLGKKEE). The span at 1763-1804 (GEEEKGEEEEEELEEEEEEEEETEEEELGKEEIEEKEEERDE) shows a compositional bias: acidic residues.

It belongs to the CFAP65 family. Interacts with CFAP47.

The protein resides in the cell projection. It localises to the cilium. Its subcellular location is the flagellum membrane. It is found in the cytoplasmic vesicle. The protein localises to the secretory vesicle. The protein resides in the acrosome membrane. It localises to the cytoplasm. Functionally, plays a role in flagellar formation and sperm motility. This chain is Cilia- and flagella-associated protein 65, found in Homo sapiens (Human).